A 198-amino-acid chain; its full sequence is Glycerol-3-phosphate acyltransferase (198 aa).

Transmembrane regions (helical) follow at residues 5–25 (YLII…SIAI), 55–75 (VGLA…YLGF), 79–99 (GSLG…LPVL), 114–134 (VLLF…LIVV), 139–159 (YVSL…LIYI), and 164–184 (YIGL…RSNI).

It belongs to the PlsY family. As to quaternary structure, probably interacts with PlsX.

It is found in the cell membrane. The catalysed reaction is an acyl phosphate + sn-glycerol 3-phosphate = a 1-acyl-sn-glycero-3-phosphate + phosphate. The protein operates within lipid metabolism; phospholipid metabolism. In terms of biological role, catalyzes the transfer of an acyl group from acyl-phosphate (acyl-PO(4)) to glycerol-3-phosphate (G3P) to form lysophosphatidic acid (LPA). This enzyme utilizes acyl-phosphate as fatty acyl donor, but not acyl-CoA or acyl-ACP. This is Glycerol-3-phosphate acyltransferase from Finegoldia magna (strain ATCC 29328 / DSM 20472 / WAL 2508) (Peptostreptococcus magnus).